The chain runs to 59 residues: Potassium channel toxin alpha-KTx 4.5 (59 aa).

The N-terminal stretch at 1-22 (MKAFYGVLIIFILISMLDLSQQ) is a signal peptide. 3 disulfides stabilise this stretch: C29-C50, C35-C55, and C39-C57. The tract at residues 48 to 55 (GKCMNGKC) is interaction with Ca(2+)-activated K(+) channels.

As to expression, expressed by the venom gland.

It localises to the secreted. Functionally, inhibits with low potency Kv1.1/KCNA1, Kv1.2/KCNA2, Kv1.3/KCNA3 and Kv11.1/KCNH2/ERG1 voltage-gated potassium channels. In Tityus costatus (Brazilian scorpion), this protein is Potassium channel toxin alpha-KTx 4.5.